We begin with the raw amino-acid sequence, 250 residues long: Triosephosphate isomerase (250 aa).

9–11 provides a ligand contact to substrate; that stretch reads NWK. Catalysis depends on His95, which acts as the Electrophile. Glu167 acts as the Proton acceptor in catalysis. Substrate contacts are provided by residues Gly173, Ser213, and 234–235; that span reads GG.

The protein belongs to the triosephosphate isomerase family. Homodimer.

Its subcellular location is the cytoplasm. The catalysed reaction is D-glyceraldehyde 3-phosphate = dihydroxyacetone phosphate. Its pathway is carbohydrate biosynthesis; gluconeogenesis. It functions in the pathway carbohydrate degradation; glycolysis; D-glyceraldehyde 3-phosphate from glycerone phosphate: step 1/1. In terms of biological role, involved in the gluconeogenesis. Catalyzes stereospecifically the conversion of dihydroxyacetone phosphate (DHAP) to D-glyceraldehyde-3-phosphate (G3P). This is Triosephosphate isomerase from Chloroflexus aurantiacus (strain ATCC 29366 / DSM 635 / J-10-fl).